A 310-amino-acid chain; its full sequence is Ribosomal RNA small subunit methyltransferase H (310 aa).

S-adenosyl-L-methionine contacts are provided by residues 40 to 42, aspartate 59, phenylalanine 89, aspartate 104, and glutamine 111; that span reads GGH.

Belongs to the methyltransferase superfamily. RsmH family.

The protein resides in the cytoplasm. It carries out the reaction cytidine(1402) in 16S rRNA + S-adenosyl-L-methionine = N(4)-methylcytidine(1402) in 16S rRNA + S-adenosyl-L-homocysteine + H(+). Functionally, specifically methylates the N4 position of cytidine in position 1402 (C1402) of 16S rRNA. This chain is Ribosomal RNA small subunit methyltransferase H, found in Amoebophilus asiaticus (strain 5a2).